The primary structure comprises 108 residues: ADM5 (108 aa).

The signal sequence occupies residues 1 to 18 (MTAHILLLWLFASSILGD). Residues 19–25 (PDSAGRL) constitute a propeptide that is removed on maturation. Cysteine 38 and cysteine 43 are joined by a disulfide. The segment at 61-108 (KELSGKAGRKPQDPYSYGRRRRRRRRRREARLLRRLQDPSLRRAQLAG) is disordered. The residue at position 77 (tyrosine 77) is a Tyrosine amide. Basic residues predominate over residues 78–89 (GRRRRRRRRRRE). Positions 89-108 (EARLLRRLQDPSLRRAQLAG) are excised as a propeptide. The segment covering 90–101 (ARLLRRLQDPSL) has biased composition (basic and acidic residues).

The protein belongs to the adrenomedullin family. As to expression, expressed abundantly in the spleen and thymus. Also expressed in adrenal and pituitary. Not expressed in brain, heart, kidney, liver and stomach.

Its subcellular location is the secreted. In terms of biological role, seems to have a peripheral vasodepressor effect and a central vasopressor effect. In Sus scrofa (Pig), this protein is ADM5 (ADM5).